The chain runs to 650 residues: Threonine--tRNA ligase (650 aa).

The region spanning 1–66 is the TGS domain; it reads MVQITLPDGS…EHDAQLAIVT (66 aa). The interval 247-538 is catalytic; it reads DHRKIGRDLD…LIENHAGAMP (292 aa). 3 residues coordinate Zn(2+): Cys-338, His-389, and His-515.

It belongs to the class-II aminoacyl-tRNA synthetase family. As to quaternary structure, homodimer. Zn(2+) is required as a cofactor.

The protein localises to the cytoplasm. The enzyme catalyses tRNA(Thr) + L-threonine + ATP = L-threonyl-tRNA(Thr) + AMP + diphosphate + H(+). Its function is as follows. Catalyzes the attachment of threonine to tRNA(Thr) in a two-step reaction: L-threonine is first activated by ATP to form Thr-AMP and then transferred to the acceptor end of tRNA(Thr). Also edits incorrectly charged L-seryl-tRNA(Thr). The protein is Threonine--tRNA ligase of Bordetella petrii (strain ATCC BAA-461 / DSM 12804 / CCUG 43448).